The chain runs to 269 residues: 3-methyl-2-oxobutanoate hydroxymethyltransferase (269 aa).

The Mg(2+) site is built by Asp50 and Asp89. Residues 50–51 (DS), Asp89, and Lys118 each bind 3-methyl-2-oxobutanoate. Glu120 serves as a coordination point for Mg(2+). Glu187 acts as the Proton acceptor in catalysis.

This sequence belongs to the PanB family. Homodecamer; pentamer of dimers. Mg(2+) serves as cofactor.

The protein localises to the cytoplasm. It catalyses the reaction 3-methyl-2-oxobutanoate + (6R)-5,10-methylene-5,6,7,8-tetrahydrofolate + H2O = 2-dehydropantoate + (6S)-5,6,7,8-tetrahydrofolate. It functions in the pathway cofactor biosynthesis; (R)-pantothenate biosynthesis; (R)-pantoate from 3-methyl-2-oxobutanoate: step 1/2. Catalyzes the reversible reaction in which hydroxymethyl group from 5,10-methylenetetrahydrofolate is transferred onto alpha-ketoisovalerate to form ketopantoate. The chain is 3-methyl-2-oxobutanoate hydroxymethyltransferase from Aliarcobacter butzleri (strain RM4018) (Arcobacter butzleri).